The sequence spans 386 residues: Zinc finger protein 385A (386 aa).

The Matrin-type 1 zinc finger occupies isoleucine 74 to histidine 98. A disordered region spans residues glutamine 88–glutamate 193. Basic and acidic residues predominate over residues lysine 103–glycine 121. The segment at asparagine 145–alanine 351 is necessary for binding to ITPR1, CEBPA and p53/TP53 mRNAs. Residue serine 185 is modified to Phosphoserine. The segment at leucine 201–histidine 225 adopts a Matrin-type 2 zinc-finger fold. Threonine 248 is modified (phosphothreonine). The Matrin-type 3 zinc-finger motif lies at phenylalanine 261–histidine 285. The disordered stretch occupies residues histidine 279–glycine 305.

As to quaternary structure, interacts with p53/TP53; the interaction is direct and enhances p53/TP53 transactivation functions on cell-cycle arrest target genes, resulting in growth arrest. Interacts with ELAVL1; the interaction is indirect, mRNA-dependent and may regulate p53/TP53 expression. Ubiquitinated upon prolonged exposure to genotoxic stress, which leads to proteasomal degradation of ZNF385A and releases p53/TP53 from cell-cycle arrest target gene promoters. In terms of tissue distribution, expressed in brain and testis (at protein level). In brain, the expression is located to olfactory bulb, cerebral cortex, hippocampus, satellite cells and Purkinje cells of the cerebellum molecular layer. Detected in bone marrow, white and brown adipose tissue, lung and at lower levels in the thymus.

Its subcellular location is the cytoplasm. The protein localises to the nucleus. The protein resides in the nucleolus. It localises to the cell projection. It is found in the dendrite. In terms of biological role, RNA-binding protein that affects the localization and the translation of a subset of mRNA. May play a role in adipogenesis through binding to the 3'-UTR of CEBPA mRNA and regulation of its translation. Targets ITPR1 mRNA to dendrites in Purkinje cells, and may regulate its activity-dependent translation. With ELAVL1, binds the 3'-UTR of p53/TP53 mRNAs to control their nuclear export induced by CDKN2A. Hence, may regulate p53/TP53 expression and mediate in part the CDKN2A anti-proliferative activity. May also bind CCNB1 mRNA. Alternatively, may also regulate p53/TP53 activity through direct protein-protein interaction. Interacts with p53/TP53 and promotes cell-cycle arrest over apoptosis enhancing preferentially the DNA binding and transactivation of p53/TP53 on cell-cycle arrest target genes over proapoptotic target genes. May also regulate the ubiquitination and stability of CDKN1A promoting DNA damage-induced cell cycle arrest. Also plays a role in megakaryocytes differentiation. This is Zinc finger protein 385A (Znf385a) from Mus musculus (Mouse).